The following is a 208-amino-acid chain: MKRPIFIGITGGTGSGKSTIAKEIYRQFGEDCIAMIEQDSYYKDQSHLSMEDRVKTNYDHPNAFDNNLLVSHLESLLNGHSIQKPSYDFSIHNRIEDTTKVEPKEIVIVEGILILEDPRIRELLDIKIYVDTDADVRIIRRMVRDINERGRTMESVINQYLNVVKPMHNQFTEPTKKFADIIIPEGGHNKVAIDIIVAKIKEVLGKYE.

11 to 18 (GGTGSGKS) serves as a coordination point for ATP.

Belongs to the uridine kinase family.

The protein localises to the cytoplasm. It catalyses the reaction uridine + ATP = UMP + ADP + H(+). The enzyme catalyses cytidine + ATP = CMP + ADP + H(+). It participates in pyrimidine metabolism; CTP biosynthesis via salvage pathway; CTP from cytidine: step 1/3. It functions in the pathway pyrimidine metabolism; UMP biosynthesis via salvage pathway; UMP from uridine: step 1/1. The polypeptide is Uridine kinase (Clostridium perfringens (strain ATCC 13124 / DSM 756 / JCM 1290 / NCIMB 6125 / NCTC 8237 / Type A)).